We begin with the raw amino-acid sequence, 129 residues long: Glycine cleavage system H protein (129 aa).

The Lipoyl-binding domain maps to 22 to 103 (TGTVGITDYA…AHTAWIMKIE (82 aa)). K63 is subject to N6-lipoyllysine.

This sequence belongs to the GcvH family. In terms of assembly, the glycine cleavage system is composed of four proteins: P, T, L and H. (R)-lipoate serves as cofactor.

In terms of biological role, the glycine cleavage system catalyzes the degradation of glycine. The H protein shuttles the methylamine group of glycine from the P protein to the T protein. This chain is Glycine cleavage system H protein, found in Acidobacterium capsulatum (strain ATCC 51196 / DSM 11244 / BCRC 80197 / JCM 7670 / NBRC 15755 / NCIMB 13165 / 161).